Consider the following 146-residue polypeptide: D-aminoacyl-tRNA deacylase (146 aa).

Residues 137–138 (GP) carry the Gly-cisPro motif, important for rejection of L-amino acids motif.

The protein belongs to the DTD family. Homodimer.

The protein resides in the cytoplasm. It catalyses the reaction glycyl-tRNA(Ala) + H2O = tRNA(Ala) + glycine + H(+). The catalysed reaction is a D-aminoacyl-tRNA + H2O = a tRNA + a D-alpha-amino acid + H(+). An aminoacyl-tRNA editing enzyme that deacylates mischarged D-aminoacyl-tRNAs. Also deacylates mischarged glycyl-tRNA(Ala), protecting cells against glycine mischarging by AlaRS. Acts via tRNA-based rather than protein-based catalysis; rejects L-amino acids rather than detecting D-amino acids in the active site. By recycling D-aminoacyl-tRNA to D-amino acids and free tRNA molecules, this enzyme counteracts the toxicity associated with the formation of D-aminoacyl-tRNA entities in vivo and helps enforce protein L-homochirality. The polypeptide is D-aminoacyl-tRNA deacylase (Bacillus mycoides (strain KBAB4) (Bacillus weihenstephanensis)).